The following is a 427-amino-acid chain: 3-phosphoshikimate 1-carboxyvinyltransferase (427 aa).

3-phosphoshikimate-binding residues include K22, S23, and R27. Phosphoenolpyruvate is bound at residue K22. Positions 96 and 124 each coordinate phosphoenolpyruvate. Positions 170, 171, 172, 198, 313, 336, and 340 each coordinate 3-phosphoshikimate. Q172 lines the phosphoenolpyruvate pocket. D313 (proton acceptor) is an active-site residue. Residues R344, R386, and K411 each contribute to the phosphoenolpyruvate site.

Belongs to the EPSP synthase family. Monomer.

It is found in the cytoplasm. It carries out the reaction 3-phosphoshikimate + phosphoenolpyruvate = 5-O-(1-carboxyvinyl)-3-phosphoshikimate + phosphate. It functions in the pathway metabolic intermediate biosynthesis; chorismate biosynthesis; chorismate from D-erythrose 4-phosphate and phosphoenolpyruvate: step 6/7. Functionally, catalyzes the transfer of the enolpyruvyl moiety of phosphoenolpyruvate (PEP) to the 5-hydroxyl of shikimate-3-phosphate (S3P) to produce enolpyruvyl shikimate-3-phosphate and inorganic phosphate. The sequence is that of 3-phosphoshikimate 1-carboxyvinyltransferase from Aeromonas salmonicida (strain A449).